A 648-amino-acid polypeptide reads, in one-letter code: Threonine--tRNA ligase (648 aa).

Residues 1 to 61 form the TGS domain; sequence MINITFPDGA…DTDGSIEIVT (61 aa). Positions 242–540 are catalytic; the sequence is DHRKLGKELD…LIETYKGAFP (299 aa). Zn(2+)-binding residues include Cys-336, His-387, and His-517.

Belongs to the class-II aminoacyl-tRNA synthetase family. In terms of assembly, homodimer. Requires Zn(2+) as cofactor.

Its subcellular location is the cytoplasm. The catalysed reaction is tRNA(Thr) + L-threonine + ATP = L-threonyl-tRNA(Thr) + AMP + diphosphate + H(+). Catalyzes the attachment of threonine to tRNA(Thr) in a two-step reaction: L-threonine is first activated by ATP to form Thr-AMP and then transferred to the acceptor end of tRNA(Thr). Also edits incorrectly charged L-seryl-tRNA(Thr). This is Threonine--tRNA ligase from Streptococcus uberis (strain ATCC BAA-854 / 0140J).